Reading from the N-terminus, the 320-residue chain is Olfactory receptor 51E2 (320 aa).

Residues 1–24 (MSSCNFTHATFVLIGIPGLEKAHF) are Extracellular-facing. N-linked (GlcNAc...) asparagine glycosylation occurs at asparagine 5. Residues 25-45 (WVGFPLLSMYVVAMFGNCIVV) form a helical membrane-spanning segment. The Cytoplasmic segment spans residues 46 to 53 (FIVRTERS). Residues 54-74 (LHAPMYLFLCMLAAIDLALST) traverse the membrane as a helical segment. Topologically, residues 75–98 (STMPKILALFWFDSREISFEACLT) are extracellular. Cysteine 96 and cysteine 178 form a disulfide bridge. The chain crosses the membrane as a helical span at residues 99-119 (QMFFIHALSAIESTILLAMAF). Over 120-138 (DRYVAICHPLRHAAVLNNT) the chain is Cytoplasmic. A helical membrane pass occupies residues 139–159 (VTAQIGIVAVVRGSLFFFPLP). Residues 160–195 (LLIKRLAFCHSNVLSHSYCVHQDVMKLAYADTLPNV) lie on the Extracellular side of the membrane. The helical transmembrane segment at 196–216 (VYGLTAILLVMGVDVMFISLS) threads the bilayer. Topologically, residues 217–236 (YFLIIRTVLQLPSKSERAKA) are cytoplasmic. Residues 237 to 257 (FGTCVSHIGVVLAFYVPLIGL) traverse the membrane as a helical segment. Residues 258-272 (SVVHRFGNSLHPIVR) are Extracellular-facing. The helical transmembrane segment at 273 to 293 (VVMGDIYLLLPPVINPIIYGA) threads the bilayer. The Cytoplasmic segment spans residues 294–320 (KTKQIRTRVLAMFKISCDKDLQAVGGK).

Belongs to the G-protein coupled receptor 1 family. As to expression, highly expressed in the prostate. Also expressed in spleen, liver, olfactory epithelium, retinal pigment epithelium and medulla oblongata. In the retinal pigment epithelium expression is restricted to the pigment cells and choroid (at protein level). Expressed in epidermal melanocytes (at protein level).

The protein localises to the cell membrane. It localises to the early endosome membrane. Functionally, olfactory receptor. Activated by the odorant, beta-ionone, a synthetic terpenoid. The activity of this receptor is probably mediated by G-proteins leading to the elevation of intracellular Ca(2+), cAMP and activation of the protein kinases PKA and MAPK3/MAPK1. Stimulation of OR51E2 by beta-ionone affects melanocyte proliferation, differentiation, and melanogenesis. Activation of OR51E2 by beta-ionone increases proliferation and migration of primary retinal pigment epithelial (RPE) cells. Activated also by the short-chain fatty acids (SCFA) acetate and propionate. In response to SCFA, may positively regulate renin secretion and increase blood pressure. May also be activated by steroid hormones and regulate cell proliferation. Activated by L-lactate in glomus cells. The protein is Olfactory receptor 51E2 of Homo sapiens (Human).